A 276-amino-acid polypeptide reads, in one-letter code: Shikimate dehydrogenase (NADP(+)) (276 aa).

Shikimate-binding positions include 18 to 20 and Thr65; that span reads SRS. Lys69 serves as the catalytic Proton acceptor. Shikimate contacts are provided by Asn90 and Asp106. NADP(+) is bound by residues 132-136 and Ile221; that span reads GAGGA. Tyr223 serves as a coordination point for shikimate. Gly244 lines the NADP(+) pocket.

This sequence belongs to the shikimate dehydrogenase family. As to quaternary structure, homodimer.

It carries out the reaction shikimate + NADP(+) = 3-dehydroshikimate + NADPH + H(+). It participates in metabolic intermediate biosynthesis; chorismate biosynthesis; chorismate from D-erythrose 4-phosphate and phosphoenolpyruvate: step 4/7. In terms of biological role, involved in the biosynthesis of the chorismate, which leads to the biosynthesis of aromatic amino acids. Catalyzes the reversible NADPH linked reduction of 3-dehydroshikimate (DHSA) to yield shikimate (SA). This is Shikimate dehydrogenase (NADP(+)) from Paramagnetospirillum magneticum (strain ATCC 700264 / AMB-1) (Magnetospirillum magneticum).